We begin with the raw amino-acid sequence, 742 residues long: Vesicle-fusing ATPase (742 aa).

ATP contacts are provided by residues 499–504 (NGMVDC) and 539–546 (SGSGKTAL). Position 544 (threonine 544) interacts with Mg(2+).

This sequence belongs to the AAA ATPase family. In terms of assembly, homohexamer. Binds to SNARE-SNAP complexes to form 20S particles. Mg(2+) serves as cofactor.

It localises to the cytoplasm. It carries out the reaction ATP + H2O = ADP + phosphate + H(+). Functionally, required for vesicle-mediated transport. Catalyzes the fusion of transport vesicles within the Golgi cisternae. Is also required for transport from the endoplasmic reticulum to the Golgi stack. Seems to function as a fusion protein required for the delivery of cargo proteins to all compartments of the Golgi stack independent of vesicle origin. Required for maintaining the normal morphology of the Golgi apparatus. The sequence is that of Vesicle-fusing ATPase from Arabidopsis thaliana (Mouse-ear cress).